A 228-amino-acid chain; its full sequence is Ankyrin repeat domain-containing protein 46 (228 aa).

4 ANK repeats span residues 11–40 (QTSV…DPNI), 44–73 (RGRT…DLLA), 77–103 (QGNT…KIDI), and 107–138 (NGST…EVKG). Residues 195–215 (VLLLLVVIALLSLGIAYYVSG) traverse the membrane as a helical segment.

It is found in the membrane. The chain is Ankyrin repeat domain-containing protein 46 (ankrd46) from Danio rerio (Zebrafish).